The primary structure comprises 184 residues: Peptide deformylase (184 aa).

Fe cation is bound by residues cysteine 98 and histidine 140. Glutamate 141 is a catalytic residue. Histidine 144 lines the Fe cation pocket.

This sequence belongs to the polypeptide deformylase family. Fe(2+) is required as a cofactor.

The enzyme catalyses N-terminal N-formyl-L-methionyl-[peptide] + H2O = N-terminal L-methionyl-[peptide] + formate. In terms of biological role, removes the formyl group from the N-terminal Met of newly synthesized proteins. Requires at least a dipeptide for an efficient rate of reaction. N-terminal L-methionine is a prerequisite for activity but the enzyme has broad specificity at other positions. The sequence is that of Peptide deformylase from Phocaeicola vulgatus (strain ATCC 8482 / DSM 1447 / JCM 5826 / CCUG 4940 / NBRC 14291 / NCTC 11154) (Bacteroides vulgatus).